The sequence spans 328 residues: Ubiquitin carboxyl-terminal hydrolase isozyme L5 (328 aa).

The 219-residue stretch at 7–225 (EWCLMESDPG…IRFNLMAIVS (219 aa)) folds into the UCH catalytic domain. Lysine 47 bears the N6-succinyllysine mark. The Nucleophile role is filled by cysteine 88. At lysine 158 the chain carries N6-acetyllysine. Histidine 164 (proton donor) is an active-site residue. Lysine 288 is modified (N6-succinyllysine). The 29-residue stretch at 290-318 (NYLPFIMELLKTLAEHQQLIPLVEKAKEK) folds into the ULD domain. The interaction with ADRM1 stretch occupies residues 312-328 (VEKAKEKQNAKKAQETK).

It belongs to the peptidase C12 family. As to quaternary structure, component of the 19S (PA700) regulatory complex of the 26S proteasome. Interacts with ADRM1 and NFRKB. Component of the INO80 complex; specifically part of a complex module associated with N-terminus of INO80.

The protein resides in the cytoplasm. It is found in the nucleus. The enzyme catalyses Thiol-dependent hydrolysis of ester, thioester, amide, peptide and isopeptide bonds formed by the C-terminal Gly of ubiquitin (a 76-residue protein attached to proteins as an intracellular targeting signal).. With respect to regulation, activated by ADRM1. Inhibited by interaction with NFRKB. Functionally, protease that specifically cleaves 'Lys-48'-linked polyubiquitin chains. Deubiquitinating enzyme associated with the 19S regulatory subunit of the 26S proteasome. Putative regulatory component of the INO80 complex; however is inactive in the INO80 complex and is activated by a transient interaction of the INO80 complex with the proteasome via ADRM1. The polypeptide is Ubiquitin carboxyl-terminal hydrolase isozyme L5 (UCHL5) (Bos taurus (Bovine)).